A 531-amino-acid chain; its full sequence is Peptide chain release factor 3 (531 aa).

One can recognise a tr-type G domain in the interval 10–278 (RRRRTFAIIS…SLIDWAPAPK (269 aa)). Residues 19–26 (SHPDAGKT), 87–91 (DTPGH), and 141–144 (NKYD) contribute to the GTP site.

This sequence belongs to the TRAFAC class translation factor GTPase superfamily. Classic translation factor GTPase family. PrfC subfamily.

It is found in the cytoplasm. Increases the formation of ribosomal termination complexes and stimulates activities of RF-1 and RF-2. It binds guanine nucleotides and has strong preference for UGA stop codons. It may interact directly with the ribosome. The stimulation of RF-1 and RF-2 is significantly reduced by GTP and GDP, but not by GMP. This is Peptide chain release factor 3 from Neisseria meningitidis serogroup C / serotype 2a (strain ATCC 700532 / DSM 15464 / FAM18).